A 201-amino-acid chain; its full sequence is 3-isopropylmalate dehydratase small subunit (201 aa).

Belongs to the LeuD family. LeuD type 1 subfamily. In terms of assembly, heterodimer of LeuC and LeuD.

It catalyses the reaction (2R,3S)-3-isopropylmalate = (2S)-2-isopropylmalate. Its pathway is amino-acid biosynthesis; L-leucine biosynthesis; L-leucine from 3-methyl-2-oxobutanoate: step 2/4. Its function is as follows. Catalyzes the isomerization between 2-isopropylmalate and 3-isopropylmalate, via the formation of 2-isopropylmaleate. The chain is 3-isopropylmalate dehydratase small subunit from Shewanella frigidimarina (strain NCIMB 400).